A 289-amino-acid polypeptide reads, in one-letter code: Secretory carrier-associated membrane protein (289 aa).

The tract at residues 1 to 65 (MAGRYDPNPF…TSTDGKKKER (65 aa)) is disordered. Residues 1–123 (MAGRYDPNPF…EIPIHLRTLQ (123 aa)) are Cytoplasmic-facing. Over residues 16 to 31 (NPFSNPRSAASATNSR) the composition is skewed to polar residues. A coiled-coil region spans residues 59-98 (DGKKKERDLQAKEAELRKREQEVRRKEEAIARAGIVIEEK). Transmembrane regions (helical) follow at residues 124–144 (YVAF…VVSV), 156–176 (IWFL…ALWY), 191–211 (FGWF…AAVA), and 239–259 (IFYF…IWVI). Residues 260–289 (QQVYMHFRGGGKTAEMKREAALGAMGAALR) lie on the Cytoplasmic side of the membrane.

The protein belongs to the SCAMP family.

The protein resides in the cell membrane. Its subcellular location is the cytoplasmic vesicle. It localises to the secretory vesicle membrane. Probably involved in membrane trafficking. This Pisum sativum (Garden pea) protein is Secretory carrier-associated membrane protein (PSAM2).